Consider the following 578-residue polypeptide: Maltogenic alpha-amylase (578 aa).

It belongs to the glycosyl hydrolase 13 family.

The enzyme catalyses hydrolysis of (1-&gt;4)-alpha-D-glucosidic linkages in polysaccharides so as to remove successive alpha-maltose residues from the non-reducing ends of the chains.. Converts starch into maltose. In contrary to other maltogenic alpha-amylases BlmA cannot hydrolyze 1,4-alpha-glucosidic linkage next to 1,6-alpha-glucosidic linkages. The protein is Maltogenic alpha-amylase (blmA) of Bacillus licheniformis.